Here is a 382-residue protein sequence, read N- to C-terminus: Protein shisa-9A (382 aa).

Positions M1 to A26 are cleaved as a signal peptide. Over Q27–K132 the chain is Extracellular. N39 carries N-linked (GlcNAc...) asparagine glycosylation. Residues T133–F153 form a helical membrane-spanning segment. Over T154–V382 the chain is Cytoplasmic.

It belongs to the shisa family. SHISA9 subfamily. Component of some AMPA receptors (ionotropic glutamate receptors) complex.

It is found in the cell projection. It localises to the dendritic spine membrane. Its subcellular location is the synapse. In terms of biological role, regulator of short-term neuronal synaptic plasticity in the dentate gyrus. Associates with AMPA receptors (ionotropic glutamate receptors) in synaptic spines and promotes AMPA receptor desensitization at excitatory synapses. The polypeptide is Protein shisa-9A (shisa9a) (Danio rerio (Zebrafish)).